Consider the following 698-residue polypeptide: Elongation factor G (698 aa).

The 276-residue stretch at 10-285 (DKTRNIGIMA…AVVDYLPSPL (276 aa)) folds into the tr-type G domain. GTP contacts are provided by residues 19 to 26 (AHIDAGKT), 83 to 87 (DTPGH), and 137 to 140 (NKMD).

The protein belongs to the TRAFAC class translation factor GTPase superfamily. Classic translation factor GTPase family. EF-G/EF-2 subfamily.

It is found in the cytoplasm. Functionally, catalyzes the GTP-dependent ribosomal translocation step during translation elongation. During this step, the ribosome changes from the pre-translocational (PRE) to the post-translocational (POST) state as the newly formed A-site-bound peptidyl-tRNA and P-site-bound deacylated tRNA move to the P and E sites, respectively. Catalyzes the coordinated movement of the two tRNA molecules, the mRNA and conformational changes in the ribosome. This chain is Elongation factor G, found in Lactiplantibacillus plantarum (strain ATCC BAA-793 / NCIMB 8826 / WCFS1) (Lactobacillus plantarum).